A 91-amino-acid chain; its full sequence is UPF0213 protein NMA2126 (91 aa).

A GIY-YIG domain is found at 4–83 (SNWSLYLILC…AAQKRKLWEQ (80 aa)).

This sequence belongs to the UPF0213 family.

In Neisseria meningitidis serogroup A / serotype 4A (strain DSM 15465 / Z2491), this protein is UPF0213 protein NMA2126.